Reading from the N-terminus, the 478-residue chain is NADH-quinone oxidoreductase subunit N 1 (478 aa).

A run of 14 helical transmembrane segments spans residues 6 to 26, 33 to 53, 71 to 91, 99 to 119, 121 to 141, 156 to 176, 193 to 212, 244 to 264, 265 to 285, 299 to 319, 321 to 341, 364 to 384, 388 to 408, and 438 to 458; these read TVLPILFLAIAGMIMLMSGVF, FAITAASIVVLAIAARLLVAA, FADVLVALGAIGALALSVTFN, FEFPVLVLFAVTGMVVLVSAS, LITLYIGFEIQSLALYVLAAF, FVLGALSSGLLLYGISLVYGF, PTAAVGSTIGLVFVLVGLAF, IAVFALLLRVMLGPFGPVLGQ, WRDLVQIIAAASMVIGAIGAI, IGHMGYALMGLAAGTAAGVSG, LIYLAIYLVMSLGTFGCIIAM, FAFVLAVMMWSMAGIPPLAGF, FYVFAAAINAGLGPLAVLGII, and AGVSLVMGAAAAFTVLFVFHP.

The protein belongs to the complex I subunit 2 family. In terms of assembly, NDH-1 is composed of 14 different subunits. Subunits NuoA, H, J, K, L, M, N constitute the membrane sector of the complex.

The protein resides in the cell inner membrane. The enzyme catalyses a quinone + NADH + 5 H(+)(in) = a quinol + NAD(+) + 4 H(+)(out). NDH-1 shuttles electrons from NADH, via FMN and iron-sulfur (Fe-S) centers, to quinones in the respiratory chain. The immediate electron acceptor for the enzyme in this species is believed to be ubiquinone. Couples the redox reaction to proton translocation (for every two electrons transferred, four hydrogen ions are translocated across the cytoplasmic membrane), and thus conserves the redox energy in a proton gradient. The polypeptide is NADH-quinone oxidoreductase subunit N 1 (Acidiphilium cryptum (strain JF-5)).